A 54-amino-acid chain; its full sequence is ATP synthase F(0) complex subunit 8 (54 aa).

Residues 4 to 24 (LNPGPWFAILVFSWLIFLTII) traverse the membrane as a helical segment. Residues 35 to 54 (NEPTPVSAEKHKTESWDWPW) are disordered. Over residues 42-54 (AEKHKTESWDWPW) the composition is skewed to basic and acidic residues.

Belongs to the ATPase protein 8 family. In terms of assembly, component of the ATP synthase complex composed at least of ATP5F1A/subunit alpha, ATP5F1B/subunit beta, ATP5MC1/subunit c (homooctomer), MT-ATP6/subunit a, MT-ATP8/subunit 8, ATP5ME/subunit e, ATP5MF/subunit f, ATP5MG/subunit g, ATP5MK/subunit k, ATP5MJ/subunit j, ATP5F1C/subunit gamma, ATP5F1D/subunit delta, ATP5F1E/subunit epsilon, ATP5PF/subunit F6, ATP5PB/subunit b, ATP5PD/subunit d, ATP5PO/subunit OSCP. ATP synthase complex consists of a soluble F(1) head domain (subunits alpha(3) and beta(3)) - the catalytic core - and a membrane F(0) domain - the membrane proton channel (subunits c, a, 8, e, f, g, k and j). These two domains are linked by a central stalk (subunits gamma, delta, and epsilon) rotating inside the F1 region and a stationary peripheral stalk (subunits F6, b, d, and OSCP).

It localises to the mitochondrion membrane. In terms of biological role, subunit 8, of the mitochondrial membrane ATP synthase complex (F(1)F(0) ATP synthase or Complex V) that produces ATP from ADP in the presence of a proton gradient across the membrane which is generated by electron transport complexes of the respiratory chain. ATP synthase complex consist of a soluble F(1) head domain - the catalytic core - and a membrane F(1) domain - the membrane proton channel. These two domains are linked by a central stalk rotating inside the F(1) region and a stationary peripheral stalk. During catalysis, ATP synthesis in the catalytic domain of F(1) is coupled via a rotary mechanism of the central stalk subunits to proton translocation. In vivo, can only synthesize ATP although its ATP hydrolase activity can be activated artificially in vitro. Part of the complex F(0) domain. This is ATP synthase F(0) complex subunit 8 from Cyprinus carpio (Common carp).